Here is a 236-residue protein sequence, read N- to C-terminus: uncharacterized protein (236 aa).

This is an uncharacterized protein from Saccharolobus islandicus (Sulfolobus islandicus).